We begin with the raw amino-acid sequence, 341 residues long: RNA 3'-terminal phosphate cyclase (341 aa).

ATP-binding positions include glutamine 102 and 283–287 (HLADQ). Histidine 308 acts as the Tele-AMP-histidine intermediate in catalysis.

It belongs to the RNA 3'-terminal cyclase family. Type 1 subfamily.

It is found in the cytoplasm. The catalysed reaction is a 3'-end 3'-phospho-ribonucleotide-RNA + ATP = a 3'-end 2',3'-cyclophospho-ribonucleotide-RNA + AMP + diphosphate. Functionally, catalyzes the conversion of 3'-phosphate to a 2',3'-cyclic phosphodiester at the end of RNA. The mechanism of action of the enzyme occurs in 3 steps: (A) adenylation of the enzyme by ATP; (B) transfer of adenylate to an RNA-N3'P to produce RNA-N3'PP5'A; (C) and attack of the adjacent 2'-hydroxyl on the 3'-phosphorus in the diester linkage to produce the cyclic end product. The biological role of this enzyme is unknown but it is likely to function in some aspects of cellular RNA processing. This is RNA 3'-terminal phosphate cyclase from Pseudomonas aeruginosa (strain UCBPP-PA14).